The chain runs to 1488 residues: Chromosome partition protein MukB (1488 aa).

34-41 (GGNGAGKS) is a binding site for ATP. 3 coiled-coil regions span residues 326 to 418 (LEAD…QYNQ), 444 to 472 (LDTF…QTAH), and 509 to 602 (RHLA…QRAP). The interval 666–783 (PGGAEDQRLN…SLPIFGRAAR (118 aa)) is flexible hinge. 3 coiled-coil regions span residues 835-923 (EAEI…AKLE), 977-1116 (EMLS…AKAG), and 1209-1265 (VEAI…LQSV).

This sequence belongs to the SMC family. MukB subfamily. In terms of assembly, homodimerization via its hinge domain. Binds to DNA via its C-terminal region. Interacts, and probably forms a ternary complex, with MukE and MukF via its C-terminal region. The complex formation is stimulated by calcium or magnesium. Interacts with tubulin-related protein FtsZ.

It is found in the cytoplasm. The protein resides in the nucleoid. In terms of biological role, plays a central role in chromosome condensation, segregation and cell cycle progression. Functions as a homodimer, which is essential for chromosome partition. Involved in negative DNA supercoiling in vivo, and by this means organize and compact chromosomes. May achieve or facilitate chromosome segregation by condensation DNA from both sides of a centrally located replisome during cell division. In Salmonella paratyphi B (strain ATCC BAA-1250 / SPB7), this protein is Chromosome partition protein MukB.